Consider the following 250-residue polypeptide: Myelin basic protein (250 aa).

Residues 1–28 (MGNHSGKRELSAEKASKDGEIHRGEAGK) are compositionally biased toward basic and acidic residues. The segment at 1–150 (MGNHSGKREL…SQRSKYLATA (150 aa)) is disordered. G2 bears the N-acetylalanine mark. 2 positions are modified to phosphoserine: S31 and S40. Residues 95 to 113 (FSRDAPGREDNTFKDRPSE) are compositionally biased toward basic and acidic residues. S96 is subject to Phosphothreonine. At E113 the chain carries Phosphoserine. E122 bears the Phosphothreonine mark. T125 is modified (phosphotyrosine). Phosphoserine is present on residues A135, R139, S141, and S144. A phosphotyrosine mark is found at Y146 and L147. T149 carries the phosphothreonine modification. S151 bears the Phosphoserine mark. A Phosphotyrosine modification is found at S151. The residue at position 152 (T152) is a Phosphothreonine. 2 positions are modified to citrulline: R157 and R163. T167 bears the Phosphothreonine mark. S172 carries the post-translational modification Phosphoserine. Omega-N-methylarginine is present on residues R175 and R181. The tract at residues 175–250 (RFFSGDRGAP…SRSGSPMARR (76 aa)) is disordered. S188 carries the post-translational modification Phosphoserine. At T197 the chain carries Phosphothreonine. The span at 197-206 (THYGSLPQKS) shows a compositional bias: polar residues. Y199 carries the phosphotyrosine modification. A Phosphoserine modification is found at S206. T211, T226, and T229 each carry phosphothreonine. Q234 bears the Deamidated glutamine mark. A Citrulline modification is found at R239. S241 carries the phosphoserine modification. S245 carries the post-translational modification Phosphoserine; by UHMK1. R250 is modified (citrulline).

Belongs to the myelin basic protein family. Homodimer. As in other animals, several charge isomers may be produced as a result of optional post-translational modifications, such as phosphorylation of serine or threonine residues, deamidation of glutamine or asparagine residues, citrullination and methylation of arginine residues. In terms of processing, methylated on arginine residues; decreases with the age of the animal, making MBP more cationic. Post-translationally, phosphorylated by TAOK2, VRK2, MAPK11, MAPK12, MAPK14 and MINK1. Proteolytically cleaved in B cell lysosomes by cathepsin CTSG which degrades the major immunogenic MBP epitope and prevents the activation of MBP-specific autoreactive T cells. In the embryo, isoform 1-isoform 3 are found in neurons within the central nervous system (primarily in pioneer neurons important in the formation of the cortex) and the peripheral nervous system. They are also expressed in the thymus, gut, lung and kidney. In the adult, isoform 1-isoform 3 are highly expressed in the brain (mainly in brain regions rich in oligodendrocytes) and spleen. Lower levels are seen in the heart, kidney and lung. Isoform 2 is also found in cells of the immune system. The isoforms missing the 134 first amino acids (isoform 4-isoform 13) are almost exclusively produced in the myelin-forming cells, the mature oligodendrocytes.

Its subcellular location is the myelin membrane. The protein resides in the cytoplasm. It is found in the nucleus. Functionally, the classic group of MBP isoforms (isoform 4-isoform 13) are with PLP the most abundant protein components of the myelin membrane in the CNS. They have a role in both its formation and stabilization. The non-classic group of MBP isoforms (isoform 1-isoform 3/Golli-MBPs) may preferentially have a role in the early developing brain long before myelination, maybe as components of transcriptional complexes, and may also be involved in signaling pathways in T-cells and neural cells. Differential splicing events combined to optional post-translational modifications give a wide spectrum of isomers, with each of them potentially having a specialized function. The polypeptide is Myelin basic protein (Mbp) (Mus musculus (Mouse)).